We begin with the raw amino-acid sequence, 201 residues long: Recombination protein RecR (201 aa).

The segment at C60–C75 adopts a C4-type zinc-finger fold. A Toprim domain is found at A83 to P178.

Belongs to the RecR family.

Its function is as follows. May play a role in DNA repair. It seems to be involved in an RecBC-independent recombinational process of DNA repair. It may act with RecF and RecO. The protein is Recombination protein RecR of Brucella ovis (strain ATCC 25840 / 63/290 / NCTC 10512).